We begin with the raw amino-acid sequence, 691 residues long: Elongation factor G (691 aa).

In terms of domain architecture, tr-type G spans 8–282; sequence ERVRNIGIAA…AVVDYLPAPV (275 aa). GTP contacts are provided by residues 17–24, 81–85, and 135–138; these read AHIDAGKT, DTPGH, and NKMD.

Belongs to the TRAFAC class translation factor GTPase superfamily. Classic translation factor GTPase family. EF-G/EF-2 subfamily.

The protein resides in the cytoplasm. Its function is as follows. Catalyzes the GTP-dependent ribosomal translocation step during translation elongation. During this step, the ribosome changes from the pre-translocational (PRE) to the post-translocational (POST) state as the newly formed A-site-bound peptidyl-tRNA and P-site-bound deacylated tRNA move to the P and E sites, respectively. Catalyzes the coordinated movement of the two tRNA molecules, the mRNA and conformational changes in the ribosome. The chain is Elongation factor G from Prochlorococcus marinus (strain MIT 9303).